The primary structure comprises 772 residues: Probable serine/threonine-protein kinase HAL5-like (772 aa).

Disordered stretches follow at residues 1–102 (MASS…TRHV), 115–165 (RAGT…EPNN), 185–241 (IDTQ…RSNT), and 344–396 (NADE…SANV). Basic and acidic residues predominate over residues 9–19 (SEPRISRESSL). Composition is skewed to low complexity over residues 20–33 (KRSLSISKSLKGLF) and 41–59 (NTGPTTAAAAAAPSSISTP). The span at 66-86 (TKDKQDRLKNLAANKEKELQT) shows a compositional bias: basic and acidic residues. A compositionally biased stretch (low complexity) spans 146 to 158 (RQSSSNRSSSFSN). The span at 202-212 (RRSRSTQRKRL) shows a compositional bias: basic residues. The region spanning 454-758 (GKSIGIIGQG…VDSLLKSSWM (305 aa)) is the Protein kinase domain. ATP is bound by residues 460–468 (IGQGAYGVV) and K498. D609 serves as the catalytic Proton acceptor.

The protein belongs to the protein kinase superfamily. CAMK Ser/Thr protein kinase family. NPR/HAL subfamily. HAL5 sub-subfamily.

It carries out the reaction L-seryl-[protein] + ATP = O-phospho-L-seryl-[protein] + ADP + H(+). The enzyme catalyses L-threonyl-[protein] + ATP = O-phospho-L-threonyl-[protein] + ADP + H(+). The sequence is that of Probable serine/threonine-protein kinase HAL5-like from Kluyveromyces lactis (strain ATCC 8585 / CBS 2359 / DSM 70799 / NBRC 1267 / NRRL Y-1140 / WM37) (Yeast).